The chain runs to 170 residues: Protein SprT (170 aa).

The SprT-like domain occupies 22–165 (LQLANQHLGT…RQCGEKLQFI (144 aa)). His-78 serves as a coordination point for Zn(2+). The active site involves Glu-79. Residue His-82 coordinates Zn(2+).

The protein belongs to the SprT family. Zn(2+) serves as cofactor.

The protein resides in the cytoplasm. In Yersinia pseudotuberculosis serotype O:1b (strain IP 31758), this protein is Protein SprT.